We begin with the raw amino-acid sequence, 925 residues long: Probable disease resistance protein At1g61310 (925 aa).

Positions 25–69 (GKSYIRTLEKNLRALQREMEDLRATQHEVQNKVAREESRHQQRLE) form a coiled coil. A disordered region spans residues 134–154 (NFDEVSQPPPRSEVEERPTQP). An NB-ARC domain is found at 139–442 (SQPPPRSEVE…CEGFIGEDQV (304 aa)). Residue 181 to 188 (GMGGVGKT) coordinates ATP. LRR repeat units follow at residues 525 to 546 (AVRR…SKCS), 547 to 568 (ELTT…FIRY), 571 to 594 (KLVV…SGLV), 595 to 617 (SLQY…KELK), 618 to 640 (KLTF…SRLL), and 641 to 663 (SLRV…KELQ).

Belongs to the disease resistance NB-LRR family.

Probable disease resistance protein. The protein is Probable disease resistance protein At1g61310 of Arabidopsis thaliana (Mouse-ear cress).